The sequence spans 212 residues: Large ribosomal subunit protein uL3 (212 aa).

An N5-methylglutamine modification is found at Gln153.

The protein belongs to the universal ribosomal protein uL3 family. Part of the 50S ribosomal subunit. Forms a cluster with proteins L14 and L19. In terms of processing, methylated by PrmB.

One of the primary rRNA binding proteins, it binds directly near the 3'-end of the 23S rRNA, where it nucleates assembly of the 50S subunit. This chain is Large ribosomal subunit protein uL3, found in Shewanella loihica (strain ATCC BAA-1088 / PV-4).